We begin with the raw amino-acid sequence, 283 residues long: Urease accessory protein UreD (283 aa).

The interval 1–21 is disordered; sequence MTQTQPVGTLRLTIDDQGPQG.

Belongs to the UreD family. UreD, UreF and UreG form a complex that acts as a GTP-hydrolysis-dependent molecular chaperone, activating the urease apoprotein by helping to assemble the nickel containing metallocenter of UreC. The UreE protein probably delivers the nickel.

It is found in the cytoplasm. Functionally, probably acts in the maturation of urease via the functional incorporation of the urease nickel metallocenter. Required for urease expression. This Corynebacterium glutamicum (strain ATCC 13032 / DSM 20300 / JCM 1318 / BCRC 11384 / CCUG 27702 / LMG 3730 / NBRC 12168 / NCIMB 10025 / NRRL B-2784 / 534) protein is Urease accessory protein UreD.